The primary structure comprises 535 residues: CTP synthase (535 aa).

Residues 1-267 (MTKFIFVTGG…DDIVIKKLGL (267 aa)) are amidoligase domain. Ser-13 lines the CTP pocket. UTP is bound at residue Ser-13. Residue 14 to 19 (SLGKGI) coordinates ATP. Tyr-54 contacts L-glutamine. ATP is bound at residue Asp-71. Mg(2+)-binding residues include Asp-71 and Glu-141. CTP is bound by residues 148–150 (DIE), 188–193 (KTKPTQ), and Lys-224. Residues 188–193 (KTKPTQ) and Lys-224 contribute to the UTP site. One can recognise a Glutamine amidotransferase type-1 domain in the interval 292 to 534 (TIGIVGKYVS…IGASLKTNKL (243 aa)). Gly-354 contributes to the L-glutamine binding site. Residue Cys-381 is the Nucleophile; for glutamine hydrolysis of the active site. Residues 382–385 (LGMQ), Glu-405, and Arg-462 each bind L-glutamine. Residues His-507 and Glu-509 contribute to the active site.

The protein belongs to the CTP synthase family. As to quaternary structure, homotetramer.

The catalysed reaction is UTP + L-glutamine + ATP + H2O = CTP + L-glutamate + ADP + phosphate + 2 H(+). It catalyses the reaction L-glutamine + H2O = L-glutamate + NH4(+). It carries out the reaction UTP + NH4(+) + ATP = CTP + ADP + phosphate + 2 H(+). Its pathway is pyrimidine metabolism; CTP biosynthesis via de novo pathway; CTP from UDP: step 2/2. With respect to regulation, allosterically activated by GTP, when glutamine is the substrate; GTP has no effect on the reaction when ammonia is the substrate. The allosteric effector GTP functions by stabilizing the protein conformation that binds the tetrahedral intermediate(s) formed during glutamine hydrolysis. Inhibited by the product CTP, via allosteric rather than competitive inhibition. Catalyzes the ATP-dependent amination of UTP to CTP with either L-glutamine or ammonia as the source of nitrogen. Regulates intracellular CTP levels through interactions with the four ribonucleotide triphosphates. This is CTP synthase from Carboxydothermus hydrogenoformans (strain ATCC BAA-161 / DSM 6008 / Z-2901).